A 241-amino-acid chain; its full sequence is Lipoprotein MxiJ (241 aa).

The N-terminal stretch at 1–17 (MIRYKGFILFLLLMLIG) is a signal peptide. A lipid anchor (N-palmitoyl cysteine) is attached at Cys18. Cys18 carries S-diacylglycerol cysteine lipidation.

Belongs to the YscJ lipoprotein family.

Its subcellular location is the cell outer membrane. Involved in the secretion of the Ipa antigens. In Shigella sonnei, this protein is Lipoprotein MxiJ (mxiJ).